Reading from the N-terminus, the 908-residue chain is Protein translocase subunit SecA (908 aa).

ATP-binding positions include Gln87, 105–109, and Asp512; that span reads GEGKT. A disordered region spans residues 865–908; it reads GGDDGSDEMMAHTPMIRDGDKVGRNDPCPCGSGRKYKQCHGKLS. Over residues 879–888 the composition is skewed to basic and acidic residues; the sequence is MIRDGDKVGR. The Zn(2+) site is built by Cys892, Cys894, Cys903, and His904. The span at 898 to 908 shows a compositional bias: basic residues; the sequence is RKYKQCHGKLS.

This sequence belongs to the SecA family. As to quaternary structure, monomer and homodimer. Part of the essential Sec protein translocation apparatus which comprises SecA, SecYEG and auxiliary proteins SecDF-YajC and YidC. The cofactor is Zn(2+).

The protein localises to the cell inner membrane. The protein resides in the cytoplasm. The catalysed reaction is ATP + H2O + cellular proteinSide 1 = ADP + phosphate + cellular proteinSide 2.. Its function is as follows. Part of the Sec protein translocase complex. Interacts with the SecYEG preprotein conducting channel. Has a central role in coupling the hydrolysis of ATP to the transfer of proteins into and across the cell membrane, serving both as a receptor for the preprotein-SecB complex and as an ATP-driven molecular motor driving the stepwise translocation of polypeptide chains across the membrane. This Shewanella sp. (strain MR-4) protein is Protein translocase subunit SecA.